A 236-amino-acid polypeptide reads, in one-letter code: Small ribosomal subunit protein uS2c (236 aa).

This sequence belongs to the universal ribosomal protein uS2 family.

The protein localises to the plastid. It is found in the chloroplast. In Crucihimalaya wallichii (Rock-cress), this protein is Small ribosomal subunit protein uS2c (rps2).